The chain runs to 1531 residues: Protein turtle (1531 aa).

At 1–858 (MGVCADLGSH…PARVKHKAIT (858 aa)) the chain is on the extracellular side. A disordered region spans residues 19 to 44 (QHNTEKSKEQQQQSQPLEIPEQRASK). 5 Ig-like C2-type domains span residues 132–243 (PEDA…KNGT), 253–340 (PRFS…ARVI), 344–436 (GAVI…AYLS), 440–529 (PAKV…GVMD), and 536–624 (PAFT…MAVT). 5 disulfides stabilise this stretch: C150-C227, C275-C324, C366-C419, C462-C513, and C558-C611. Fibronectin type-III domains are found at residues 632–728 (QPHA…TLED) and 760–851 (PPRN…VPAR). A helical transmembrane segment spans residues 859 to 879 (AGVVGGILFFIVAIILSVCAV). Residues 880-1531 (KICNKRKRRK…QAMQQMESVC (652 aa)) are Cytoplasmic-facing. Disordered stretches follow at residues 1248–1269 (EETRRQQQQKQHPLEDHFVPLQ) and 1318–1395 (NLNL…SYPR). Over residues 1333–1349 (SPESRSSSSGFGSKNTS) the composition is skewed to low complexity. Positions 1380–1389 (QQAQGQTPHG) are enriched in polar residues.

This sequence belongs to the immunoglobulin superfamily. Turtle family. In terms of assembly, interacts with bdl. As to expression, exclusively expressed in the central nervous system.

It is found in the membrane. In terms of biological role, essential protein that plays a role in the establishment of coordinated motor control. In the developing eye, involved in axonal targeting of the R7 photoreceptor. This Drosophila melanogaster (Fruit fly) protein is Protein turtle (tutl).